Reading from the N-terminus, the 276-residue chain is Putative hydro-lyase Xaut_1503 (276 aa).

This sequence belongs to the D-glutamate cyclase family.

The protein is Putative hydro-lyase Xaut_1503 of Xanthobacter autotrophicus (strain ATCC BAA-1158 / Py2).